Reading from the N-terminus, the 309-residue chain is Ribonuclease Z (309 aa).

The Zn(2+) site is built by H63, H65, D67, H68, H145, D216, and H274. The active-site Proton acceptor is the D67.

The protein belongs to the RNase Z family. As to quaternary structure, homodimer. The cofactor is Zn(2+).

It catalyses the reaction Endonucleolytic cleavage of RNA, removing extra 3' nucleotides from tRNA precursor, generating 3' termini of tRNAs. A 3'-hydroxy group is left at the tRNA terminus and a 5'-phosphoryl group is left at the trailer molecule.. In terms of biological role, zinc phosphodiesterase, which displays some tRNA 3'-processing endonuclease activity. Probably involved in tRNA maturation, by removing a 3'-trailer from precursor tRNA. This Streptococcus suis (strain 98HAH33) protein is Ribonuclease Z.